A 500-amino-acid chain; its full sequence is L-arabinose isomerase (500 aa).

Glu-306, Glu-333, His-349, and His-448 together coordinate Mn(2+).

The protein belongs to the arabinose isomerase family. Requires Mn(2+) as cofactor.

It catalyses the reaction beta-L-arabinopyranose = L-ribulose. The protein operates within carbohydrate degradation; L-arabinose degradation via L-ribulose; D-xylulose 5-phosphate from L-arabinose (bacterial route): step 1/3. Catalyzes the conversion of L-arabinose to L-ribulose. This is L-arabinose isomerase from Shewanella baltica (strain OS223).